We begin with the raw amino-acid sequence, 308 residues long: Cilia- and flagella-associated protein 73 (308 aa).

Coiled-coil stretches lie at residues 34–143 (RLLE…LEPC) and 175–233 (AALR…WESK).

This sequence belongs to the CFAP73 family.

The protein localises to the cytoplasm. It is found in the cytoskeleton. The protein resides in the cilium axoneme. In terms of biological role, may play a role in ciliary/flagellar motility by regulating the assembly and the activity of axonemal inner dynein arm. This chain is Cilia- and flagella-associated protein 73, found in Homo sapiens (Human).